The following is a 414-amino-acid chain: Stork-head box protein ham-1 (414 aa).

The interval 1–31 (MTYLAVVLNGPKAKNGRKVFDSFLEQNRQMF) is essential for association with cell cortex. In terms of domain architecture, Winged helix Storkhead-box1 spans 93–170 (QQVEQMHFVP…MADHYFVSVP (78 aa)). Positions 282 to 362 (ECQRKARRRN…SNEEAGSISD (81 aa)) are disordered. Residues 285 to 295 (RKARRRNHPRR) form a bi-partite nuclear localization signal region. The interval 321 to 327 (PTRRRAR) is nuclear localization signal. The segment covering 332–351 (LRSSTPNNSDSAYSISPPHT) has biased composition (polar residues).

The protein resides in the cytoplasm. It is found in the cell cortex. The protein localises to the nucleus. In terms of biological role, probable transcription factor. Required for asymmetric cell division in neuroblasts, perhaps acting by regulating spindle positioning and myosin polarization, and thus the position of the cleavage plane. Required to produce daughter cell size asymmetry in neuroblasts undergoing asymmetric cell division, usually giving rise to one precursor cell and one apoptotic cell. Positively modulates expression of the serine/threonine kinase pig-1/MELK during asymmetric division of the Q.a neuroblast. Plays a role in neural fate specification in several dopaminergic lineages, including the hermaphrodite-specific neuron (HSN)/phasmid neuron (PHB), acting in concert with the kinase, ham-1, and the T-box protein tbx-2 and the homeobox protein egl-5. The protein is Stork-head box protein ham-1 of Caenorhabditis elegans.